The sequence spans 98 residues: NADH-ubiquinone oxidoreductase chain 4L (98 aa).

The next 3 helical transmembrane spans lie at 2–22 (PSISININLAFAAALLGMLMF), 29–49 (SLLCLEGMMLSMFTLSTLTIL), and 61–81 (ILLLVFAACEAAIGLALLVMV).

It belongs to the complex I subunit 4L family. As to quaternary structure, core subunit of respiratory chain NADH dehydrogenase (Complex I) which is composed of 45 different subunits.

The protein localises to the mitochondrion inner membrane. The enzyme catalyses a ubiquinone + NADH + 5 H(+)(in) = a ubiquinol + NAD(+) + 4 H(+)(out). Functionally, core subunit of the mitochondrial membrane respiratory chain NADH dehydrogenase (Complex I) which catalyzes electron transfer from NADH through the respiratory chain, using ubiquinone as an electron acceptor. Part of the enzyme membrane arm which is embedded in the lipid bilayer and involved in proton translocation. This Microcebus mittermeieri (Mittermeier's mouse lemur) protein is NADH-ubiquinone oxidoreductase chain 4L (MT-ND4L).